The primary structure comprises 514 residues: Serine--tRNA ligase, cytoplasmic (514 aa).

An N-acetylmethionine modification is found at methionine 1. Residues arginine 9–serine 61 form an interaction with tRNA region. Serine 241 is modified (phosphoserine). Residues threonine 271 and arginine 302 each contribute to the L-serine site. Residues arginine 302–glutamate 304 and valine 318–phenylalanine 321 each bind ATP. Position 323 is an N6-acetyllysine (lysine 323). Glutamate 325 is a binding site for L-serine. Glutamate 391 to serine 394 contacts ATP. Asparagine 427 is a binding site for L-serine. The segment at proline 475 to alanine 514 is disordered. Positions glutamate 479–alanine 501 are enriched in basic and acidic residues. A Nuclear localization signal motif is present at residues lysine 482 to lysine 494. Over residues serine 504 to alanine 514 the composition is skewed to polar residues.

The protein belongs to the class-II aminoacyl-tRNA synthetase family. Type-1 seryl-tRNA synthetase subfamily. As to quaternary structure, homodimer. The tRNA molecule may bind across the dimer. Interacts with SIRT2. Interacts with METTL6; interaction is required for the tRNA N(3)-methylcytidine methyltransferase activity of METTL6.

The protein localises to the cytoplasm. The protein resides in the nucleus. It catalyses the reaction tRNA(Ser) + L-serine + ATP = L-seryl-tRNA(Ser) + AMP + diphosphate + H(+). The catalysed reaction is tRNA(Sec) + L-serine + ATP = L-seryl-tRNA(Sec) + AMP + diphosphate + H(+). The protein operates within aminoacyl-tRNA biosynthesis; selenocysteinyl-tRNA(Sec) biosynthesis; L-seryl-tRNA(Sec) from L-serine and tRNA(Sec): step 1/1. Catalyzes the attachment of serine to tRNA(Ser) in a two-step reaction: serine is first activated by ATP to form Ser-AMP and then transferred to the acceptor end of tRNA(Ser). Is probably also able to aminoacylate tRNA(Sec) with serine, to form the misacylated tRNA L-seryl-tRNA(Sec), which will be further converted into selenocysteinyl-tRNA(Sec). In the nucleus, binds to the VEGFA core promoter and prevents MYC binding and transcriptional activation by MYC. Recruits SIRT2 to the VEGFA promoter, promoting deacetylation of histone H4 at 'Lys-16' (H4K16). Thereby, inhibits the production of VEGFA and sprouting angiogenesis mediated by VEGFA. This is Serine--tRNA ligase, cytoplasmic (SARS1) from Bos taurus (Bovine).